A 234-amino-acid polypeptide reads, in one-letter code: Transmembrane protein 65 (234 aa).

The N-terminal 55 residues, 1–55 (MSRLLPLLGSRTARSLRPGPAAAPRLPSWCCCGRGLLALGVPGGPRLLGTHPKKE), are a transit peptide targeting the mitochondrion. Residues 56-110 (PMEALNTAQGARDFIYSLHSTERSCLLKELHRFESIAIAQEKLEALPPTPGQLRY) are Cytoplasmic-facing. The chain crosses the membrane as a helical span at residues 111 to 131 (VFFHNAIPFVGFGFLDNAIMI). Residues 132–138 (VAGTQIE) lie on the Extracellular side of the membrane. Residues 139 to 159 (LSIGIILGISTMAAAALGNLV) form a helical membrane-spanning segment. Residues 160-203 (SDLAGLGLAGYVEALASRLGLSIPDLTPKQVDMWQTRVSTHLGK) lie on the Cytoplasmic side of the membrane. Residues 204 to 224 (AVGVTIGCILGMFPLIFFGGS) traverse the membrane as a helical segment. The Extracellular portion of the chain corresponds to 225-234 (EEDEKLETTN).

Monomer. Homodimer. Interacts with GJA1. Interacts weakly with DSP. Interacts with SCN1B. Predominantly expressed in the ventricular tissue (at protein level).

The protein localises to the cell membrane. The protein resides in the mitochondrion inner membrane. In terms of biological role, essential for maintaining proper cardiac intercalated disk (ICD) structure and function as well as cardiac conduction velocity in the heart. Its association with SCN1B is required for stabilizing the perinexus in the ICD and for localization of GJA1 and SCN5A to the ICD. May regulate the function of the gap junction protein GJA1 and may contribute to the stability and proper localization of GJA1 to cardiac intercalated disk thereby regulating gap junction communication. Regulates mitochondrial respiration and mitochondrial DNA copy number maintenance. The polypeptide is Transmembrane protein 65 (Tmem65) (Mus musculus (Mouse)).